Reading from the N-terminus, the 343-residue chain is Leucine-rich repeat-containing protein 39 (343 aa).

10 LRR repeats span residues Glu64–Leu87, Ser88–Phe110, Gln111–Leu133, Thr134–Cys156, Asn158–Leu180, Lys181–Leu203, Pro204–Met226, Lys228–Met249, Lys250–Asn274, and Leu275–Asn295.

It localises to the cytoplasm. The protein localises to the myofibril. It is found in the sarcomere. Its subcellular location is the m line. In terms of biological role, component of the sarcomeric M-band which plays a role in myocyte response to biomechanical stress. May regulate expression of other M-band proteins via an SRF-dependent pathway. Important for normal contractile function in heart. This is Leucine-rich repeat-containing protein 39 from Danio rerio (Zebrafish).